Reading from the N-terminus, the 323-residue chain is tRNA uridine(34) hydroxylase (323 aa).

The Rhodanese domain occupies 123–217 (SDPDVVVIDT…YLETIPEEES (95 aa)). The active-site Cysteine persulfide intermediate is Cys-177.

It belongs to the TrhO family.

The enzyme catalyses uridine(34) in tRNA + AH2 + O2 = 5-hydroxyuridine(34) in tRNA + A + H2O. Functionally, catalyzes oxygen-dependent 5-hydroxyuridine (ho5U) modification at position 34 in tRNAs. In Methylobacillus flagellatus (strain ATCC 51484 / DSM 6875 / VKM B-1610 / KT), this protein is tRNA uridine(34) hydroxylase.